Here is a 427-residue protein sequence, read N- to C-terminus: N-acylglucosamine 2-epimerase (427 aa).

The tract at residues 195-216 (LLNLVEQLGEADEELAGKYAEL) is leucine-zipper.

It belongs to the N-acylglucosamine 2-epimerase family. As to quaternary structure, homodimer. Forms a heterodimer with renin and inhibits its activity.

The enzyme catalyses an N-acyl-D-glucosamine = an N-acyl-D-mannosamine. The protein operates within amino-sugar metabolism; N-acetylneuraminate degradation. Inhibited by N-ethylmaleimide, 5,5'-dithiobis-2-nitrobenzoate and iodoacetic acid. Its function is as follows. Catalyzes the interconversion of N-acetylglucosamine to N-acetylmannosamine. Involved in the N-glycolylneuraminic acid (Neu5Gc) degradation pathway: although human is not able to catalyze formation of Neu5Gc due to the inactive CMAHP enzyme, Neu5Gc is present in food and must be degraded. The chain is N-acylglucosamine 2-epimerase (RENBP) from Homo sapiens (Human).